Consider the following 352-residue polypeptide: Homeobox protein Mohawk (352 aa).

A disordered region spans residues 19–53 (GASERERGGRPYSGVLDSPHARPEVGIADGPPLKD). The segment at residues 71–132 (VRHKRQALQD…NARRRLKNTV (62 aa)) is a DNA-binding region (homeobox; TALE-type). Disordered regions lie at residues 157–194 (LSVSSDDSCSEGGENPPRTHMNEGGYNTPVHHPVIKSE) and 245–272 (TRQRNHSGSFSSNEFEEELVSPSSSETE).

It belongs to the TALE/IRO homeobox family.

The protein localises to the nucleus. May act as a morphogenetic regulator of cell adhesion. The sequence is that of Homeobox protein Mohawk (MKX) from Pongo abelii (Sumatran orangutan).